Reading from the N-terminus, the 669-residue chain is Histone-lysine N-methyltransferase, H3 lysine-9 specific SUVH3 (669 aa).

Disordered stretches follow at residues tyrosine 56 to threonine 127 and glutamate 270 to glutamine 290. Polar residues-rich tracts occupy residues glutamine 65–isoleucine 82 and arginine 93–threonine 107. A DNA-binding region (a.T hook) is located at residues lysine 108–valine 120. The YDG domain occupies glycine 208–arginine 355. Residues isoleucine 430 to glycine 491 form the Pre-SET domain. Zn(2+) contacts are provided by cysteine 432, cysteine 434, cysteine 438, cysteine 445, cysteine 447, cysteine 473, cysteine 477, cysteine 479, and cysteine 483. Residues serine 494 to glycine 638 enclose the SET domain. Residues arginine 504–tryptophan 506, aspartate 540, tyrosine 542, arginine 592, and asparagine 595–histidine 596 each bind S-adenosyl-L-methionine. Residues cysteine 598, cysteine 657, cysteine 659, and cysteine 664 each contribute to the Zn(2+) site. The Post-SET domain maps to glycine 653–glycine 669.

It belongs to the class V-like SAM-binding methyltransferase superfamily. Histone-lysine methyltransferase family. Suvar3-9 subfamily. As to expression, expressed in leaves stems and flowers.

Its subcellular location is the nucleus. It is found in the chromosome. The protein localises to the centromere. The catalysed reaction is L-lysyl(9)-[histone H3] + S-adenosyl-L-methionine = N(6)-methyl-L-lysyl(9)-[histone H3] + S-adenosyl-L-homocysteine + H(+). Its function is as follows. Histone methyltransferase. Methylates 'Lys-9' of histone H3. H3 'Lys-9' methylation represents a specific tag for epigenetic transcriptional repression. The polypeptide is Histone-lysine N-methyltransferase, H3 lysine-9 specific SUVH3 (SUVH3) (Arabidopsis thaliana (Mouse-ear cress)).